Here is a 228-residue protein sequence, read N- to C-terminus: uncharacterized protein (228 aa).

Residues 90 to 115 (TDESEESSSANNTTTTASHTLSNSKK) are disordered. The segment covering 96–113 (SSSANNTTTTASHTLSNS) has biased composition (low complexity).

It is found in the cytoplasm. It localises to the cell cortex. In terms of biological role, deletion results in antifungal drug fluconazole-resistant phenotype. This is an uncharacterized protein from Saccharomyces cerevisiae (strain ATCC 204508 / S288c) (Baker's yeast).